The following is a 215-amino-acid chain: Sodium channel regulatory subunit beta-3 (215 aa).

Residues 1–24 (MPAFNRLLPLASLVLIYWVRVCFP) form the signal peptide. The region spanning 25 to 138 (VCVEVPSETE…EAHRPFVKTT (114 aa)) is the Ig-like C2-type domain. The Extracellular segment spans residues 25–156 (VCVEVPSETE…EEAGEDFTSV (132 aa)). Cystine bridges form between Cys-26–Cys-48 and Cys-45–Cys-120. N-linked (GlcNAc...) asparagine glycosylation is found at Asn-95, Asn-109, Asn-113, and Asn-121. Residues 157 to 178 (VSEIMMYILLVFLTLWLFIEMI) traverse the membrane as a helical segment. The Cytoplasmic portion of the chain corresponds to 179–215 (YCYRKVSKAEEAAQENASDYLAIPSENKENSVVPVEE).

This sequence belongs to the sodium channel auxiliary subunit SCN3B (TC 8.A.17) family. A voltage-gated sodium (Nav) channel consists of an ion-conducting pore-forming alpha subunit functional on its own that is regulated by one or more beta subunits. Forms homodimers and homotrimers. SCN3B is non-covalently associated with alpha subunits and induces the formation of alpha subunit oligomers, including trimers. Interacts with SCN5A/Nav1.5; regulatory subunit of SCN5A/Nav1.5. Interacts with SCN7A/Nav2.1; probable regulatory subunit of SCN7A/Nav2.1. Interacts with SCN10A; regulatory subunit of SCN10A/Nav1.8. Interacts with NFASC; probably involved in targeting the sodium channels to the nodes of Ranvier. Post-translationally, intramolecular disulfide bonds favor the voltage-gated sodium channel oligomeric complex assembly. N-glycosylated. As to expression, expressed broadly in neurons in the central and peripheral nervous systems, but not in glia and most non-neuronal cells. Weak detection in lung and adrenal gland.

It is found in the cell membrane. In terms of biological role, regulatory subunit of multiple voltage-gated sodium (Nav) channels directly mediating the depolarization of excitable membranes. Navs, also called VGSCs (voltage-gated sodium channels) or VDSCs (voltage-dependent sodium channels), operate by switching between closed and open conformations depending on the voltage difference across the membrane. In the open conformation they allow Na(+) ions to selectively pass through the pore, along their electrochemical gradient. The influx of Na+ ions provokes membrane depolarization, initiating the propagation of electrical signals throughout cells and tissues. The accessory beta subunits participate in localization and functional modulation of the Nav channels. Voltage-gated sodium channels regulatory subunit that modulates channel gating kinetics. Modulates the activity of SCN2A/Nav1.2, causing a hyperpolarizing shift in the voltage-dependence of inactivation and increasing the fraction of channels operating in the fast gating mode. Also able to induce unique persistent SCN2A/Nav1.2-mediated sodium currents. Could modulate the activity of SCN10A/Nav1.8. This Rattus norvegicus (Rat) protein is Sodium channel regulatory subunit beta-3.